Here is a 226-residue protein sequence, read N- to C-terminus: Putative N-acetylmannosamine-6-phosphate 2-epimerase 1 (226 aa).

It belongs to the NanE family.

The catalysed reaction is an N-acyl-D-glucosamine 6-phosphate = an N-acyl-D-mannosamine 6-phosphate. It participates in amino-sugar metabolism; N-acetylneuraminate degradation; D-fructose 6-phosphate from N-acetylneuraminate: step 3/5. Converts N-acetylmannosamine-6-phosphate (ManNAc-6-P) to N-acetylglucosamine-6-phosphate (GlcNAc-6-P). This Salmonella typhimurium (strain LT2 / SGSC1412 / ATCC 700720) protein is Putative N-acetylmannosamine-6-phosphate 2-epimerase 1 (nanE1).